Reading from the N-terminus, the 431-residue chain is Adenylosuccinate synthetase (431 aa).

GTP-binding positions include 12-18 and 40-42; these read GDEGKGK and GHT. Residue Asp13 is the Proton acceptor of the active site. Mg(2+) contacts are provided by Asp13 and Gly40. IMP is bound by residues 13–16, 38–41, Thr131, Arg145, Gln225, Thr240, and Arg304; these read DEGK and NAGH. His41 (proton donor) is an active-site residue. A substrate-binding site is contributed by 300 to 306; the sequence is TNTGRRR. GTP is bound by residues Arg306, 332-334, and 414-416; these read KLD and STS.

It belongs to the adenylosuccinate synthetase family. In terms of assembly, homodimer. Requires Mg(2+) as cofactor.

It is found in the cytoplasm. It carries out the reaction IMP + L-aspartate + GTP = N(6)-(1,2-dicarboxyethyl)-AMP + GDP + phosphate + 2 H(+). Its pathway is purine metabolism; AMP biosynthesis via de novo pathway; AMP from IMP: step 1/2. Functionally, plays an important role in the de novo pathway of purine nucleotide biosynthesis. Catalyzes the first committed step in the biosynthesis of AMP from IMP. This is Adenylosuccinate synthetase from Methylocella silvestris (strain DSM 15510 / CIP 108128 / LMG 27833 / NCIMB 13906 / BL2).